The chain runs to 493 residues: Glutamyl-tRNA(Gln) amidotransferase subunit A (493 aa).

Residues Lys-78 and Ser-158 each act as charge relay system in the active site. Catalysis depends on Ser-182, which acts as the Acyl-ester intermediate.

Belongs to the amidase family. GatA subfamily. Heterotrimer of A, B and C subunits.

The enzyme catalyses L-glutamyl-tRNA(Gln) + L-glutamine + ATP + H2O = L-glutaminyl-tRNA(Gln) + L-glutamate + ADP + phosphate + H(+). Its function is as follows. Allows the formation of correctly charged Gln-tRNA(Gln) through the transamidation of misacylated Glu-tRNA(Gln) in organisms which lack glutaminyl-tRNA synthetase. The reaction takes place in the presence of glutamine and ATP through an activated gamma-phospho-Glu-tRNA(Gln). The protein is Glutamyl-tRNA(Gln) amidotransferase subunit A of Methylorubrum populi (strain ATCC BAA-705 / NCIMB 13946 / BJ001) (Methylobacterium populi).